A 326-amino-acid polypeptide reads, in one-letter code: Meso-diaminopimelate D-dehydrogenase (326 aa).

NADP(+)-binding positions include 11–14, 35–37, 69–72, 92–94, and 121–125; these read YGNL, TRR, CGGS, SFD, and VGWDP. Residues aspartate 94, aspartate 124, tryptophan 148, 154–155, threonine 173, arginine 199, histidine 249, and asparagine 276 contribute to the substrate site; that span reads QG.

This sequence belongs to the diaminopimelate dehydrogenase family. Homodimer.

It carries out the reaction meso-2,6-diaminopimelate + NADP(+) + H2O = (S)-2-amino-6-oxoheptanedioate + NH4(+) + NADPH + H(+). It functions in the pathway amino-acid biosynthesis; L-lysine biosynthesis via DAP pathway; DL-2,6-diaminopimelate from (S)-tetrahydrodipicolinate: step 1/1. With respect to regulation, l,L-2,6-diaminopimelate, D,D-2,6-diaminopimelate and meso-2,5-diaminoadipate competitively inhibit the oxidation of meso-2,6-diaminopimelate. L-2-amino-6-methylene-pimelate is also a potent competitive inhibitor (5 uM) of this reaction. Glyoxylate inhibits the reductive amination of L-2-amino-6-oxopimelate about 30%. The enzyme is inhibited completely by p-chloromercuribenzoate and HgCl(2) in vitro. Catalyzes the reversible NADPH-dependent reductive amination of L-2-amino-6-oxopimelate, the acyclic form of L-tetrahydrodipicolinate, to generate the meso compound, D,L-2,6-diaminopimelate. Probably plays a role in lysine biosynthesis. Exhibits a high substrate specificity, since alpha-ketoglutarate, pyruvate, oxaloacetate, glyoxylate, alpha-ketobutyrate, alpha-ketovalerate, alpha-ketocaproate, alpha-ketoisocaproate, alpha-ketoisovalerate, and phenylpyruvate are not substrates for the reductive amination reaction, and L,L-2,6-diaminopimelate, D,D-2,6-diaminopimelate, DL-alpha-aminopimelate, meso- and DL-2,5-diaminoadipate, L-djenkolate, L-cystine, L-lysine, S-(beta-aminoethy1)-L-homocysteine, L-ornithine, L-arginine, L-alpha,gamma-diaminobutyrate, L-histidine, L-phenylalanine, L-tyrosine, L-glutamate, L-aspartate, L-leucine, L-valine, L-methionine, L-serine, L-alanine, L-alpha-aminobutyrate, D-lysine, D-glutamate, D-leucine, D-alanine, D-phenylalanine, epsilon-aminocaproate, 7-aminoheptanoate, and 8-aminooctanoate are not substrates for the oxidative deamination reaction. Cannot use NAD(+) or NAD(+) analogs instead of NADP(+) for the oxidative deamination reaction. The polypeptide is Meso-diaminopimelate D-dehydrogenase (dapdh) (Lysinibacillus sphaericus (Bacillus sphaericus)).